A 330-amino-acid chain; its full sequence is Aspartate--ammonia ligase (330 aa).

Belongs to the class-II aminoacyl-tRNA synthetase family. AsnA subfamily.

The protein localises to the cytoplasm. It carries out the reaction L-aspartate + NH4(+) + ATP = L-asparagine + AMP + diphosphate + H(+). It functions in the pathway amino-acid biosynthesis; L-asparagine biosynthesis; L-asparagine from L-aspartate (ammonia route): step 1/1. This chain is Aspartate--ammonia ligase, found in Streptococcus pyogenes serotype M3 (strain ATCC BAA-595 / MGAS315).